A 149-amino-acid chain; its full sequence is Calmodulin-3 (149 aa).

N-acetylalanine is present on A2. 4 consecutive EF-hand domains span residues 8–43 (DQIA…LGQN), 44–79 (PTEA…KMKD), 81–116 (DSEE…LGEK), and 117–149 (LTDE…MMAK). Positions 21, 23, 25, 27, 32, 57, 59, 61, 63, 68, 94, 96, 98, and 105 each coordinate Ca(2+). Position 116 is an N6,N6,N6-trimethyllysine (K116). Ca(2+) is bound by residues D130, D132, D134, Q136, and E141.

It belongs to the calmodulin family.

Functionally, calmodulin mediates the control of a large number of enzymes, ion channels and other proteins by Ca(2+). Among the enzymes to be stimulated by the calmodulin-Ca(2+) complex are a number of protein kinases and phosphatases. This is Calmodulin-3 (CAM3) from Oryza sativa subsp. indica (Rice).